A 92-amino-acid polypeptide reads, in one-letter code: Small ribosomal subunit protein bS21A (92 aa).

The segment covering 25–52 has biased composition (basic and acidic residues); that stretch reads GVFREMKQRRSYEKPSERKTREKSEAIR. The disordered stretch occupies residues 25-92; that stretch reads GVFREMKQRR…LPQTAARPAG (68 aa).

It belongs to the bacterial ribosomal protein bS21 family.

This chain is Small ribosomal subunit protein bS21A, found in Bradyrhizobium diazoefficiens (strain JCM 10833 / BCRC 13528 / IAM 13628 / NBRC 14792 / USDA 110).